Consider the following 60-residue polypeptide: MFDSSIERVTLELCFHITLSIMCGCSIYFLLLVFILTFYSSVLLHLKLYFFSSDRAIFNA.

The helical transmembrane segment at 19 to 39 threads the bilayer; sequence LSIMCGCSIYFLLLVFILTFY.

The protein resides in the membrane. This is an uncharacterized protein from Saccharomyces cerevisiae (strain ATCC 204508 / S288c) (Baker's yeast).